We begin with the raw amino-acid sequence, 320 residues long: Fructose-1,6-bisphosphatase class 1 (320 aa).

4 residues coordinate Mg(2+): E105, D124, L126, and D127. Residues 127–130, Y233, and K263 each bind substrate; that span reads DGSS. E269 serves as a coordination point for Mg(2+).

Belongs to the FBPase class 1 family. Homotetramer. Mg(2+) is required as a cofactor.

It localises to the cytoplasm. The enzyme catalyses beta-D-fructose 1,6-bisphosphate + H2O = beta-D-fructose 6-phosphate + phosphate. It participates in carbohydrate biosynthesis; gluconeogenesis. In Methanocorpusculum labreanum (strain ATCC 43576 / DSM 4855 / Z), this protein is Fructose-1,6-bisphosphatase class 1.